Consider the following 258-residue polypeptide: Indole-3-glycerol phosphate synthase (258 aa).

The protein belongs to the TrpC family.

It carries out the reaction 1-(2-carboxyphenylamino)-1-deoxy-D-ribulose 5-phosphate + H(+) = (1S,2R)-1-C-(indol-3-yl)glycerol 3-phosphate + CO2 + H2O. The protein operates within amino-acid biosynthesis; L-tryptophan biosynthesis; L-tryptophan from chorismate: step 4/5. The protein is Indole-3-glycerol phosphate synthase of Campylobacter jejuni subsp. doylei (strain ATCC BAA-1458 / RM4099 / 269.97).